A 507-amino-acid chain; its full sequence is Beta-Ala-His dipeptidase (507 aa).

The first 26 residues, 1–26 (MDPKLGRMAASLLAVLLLLLERGMFS), serve as a signal peptide directing secretion. His-132 provides a ligand contact to Zn(2+). Asp-134 is an active-site residue. Asp-165 serves as a coordination point for Zn(2+). Glu-199 serves as the catalytic Proton acceptor. Residue Glu-200 coordinates Zn(2+). A Phosphoserine modification is found at Ser-219. Zn(2+) is bound at residue Asp-228. Asn-322 and Asn-382 each carry an N-linked (GlcNAc...) asparagine glycan. Residue His-478 participates in Zn(2+) binding.

The protein belongs to the peptidase M20A family. As to quaternary structure, homodimer. Requires Zn(2+) as cofactor. Found in serum and adult nervous central system. Absent in serum from patients with homocarnosinosis.

It localises to the secreted. The enzyme catalyses Preferential hydrolysis of the beta-Ala-|-His dipeptide (carnosine), and also anserine, Xaa-|-His dipeptides and other dipeptides including homocarnosine.. It catalyses the reaction carnosine + H2O = beta-alanine + L-histidine. The catalysed reaction is anserine + H2O = N(pros)-methyl-L-histidine + beta-alanine. It carries out the reaction L-alanyl-L-histidine + H2O = L-histidine + L-alanine. The enzyme catalyses glycyl-L-histidine + H2O = L-histidine + glycine. It catalyses the reaction L-homocarnosine + H2O = 4-aminobutanoate + L-histidine. Activated by cadmium ions. Inhibited by the metal chelator 1,10-o-phenantrolin. The inhibitory concentration 50% (IC(50)) is 5 uM. Functionally, catalyzes the peptide bond hydrolysis in Xaa-His dipeptides, displaying the highest activity toward carnosine (beta-alanyl-L-histidine) and anserine (beta-alanyl-3-methyl-histidine). This Homo sapiens (Human) protein is Beta-Ala-His dipeptidase.